An 87-amino-acid chain; its full sequence is Small ribosomal subunit protein bS20 (87 aa).

Positions 1 to 26 are disordered; the sequence is MANIKSAKKRAVQSEKARKHNASRRS.

Belongs to the bacterial ribosomal protein bS20 family.

Binds directly to 16S ribosomal RNA. This is Small ribosomal subunit protein bS20 from Salmonella gallinarum (strain 287/91 / NCTC 13346).